The following is a 326-amino-acid chain: Aquaporin-4 (326 aa).

The Cytoplasmic segment spans residues 1–39 (MSDGAGAAARRWGKCGGRSCSRESIMVAFKGVWTQAFWK). Residues cysteine 15 and cysteine 20 are each lipidated (S-palmitoyl cysteine). A helical membrane pass occupies residues 40–60 (AVTAEFLAMLIFVLLSVGSTI). Topologically, residues 61–72 (NWGGSENPLPVD) are extracellular. The helical transmembrane segment at 73 to 92 (MVLISLCFGLSIATMVQCFG) threads the bilayer. Over 93 to 96 (HISG) the chain is Cytoplasmic. The segment at residues 97 to 104 (GHINPAVT) is an intramembrane region (discontinuously helical). Positions 100 to 102 (NPA) match the NPA 1 motif. Topologically, residues 105–118 (VAMVCTRKISIAKS) are cytoplasmic. Phosphoserine; by PKG is present on serine 114. A helical membrane pass occupies residues 119–139 (VFYITAQCLGAIIGAGILYLV). Over 140 to 158 (TPPNVVGGLGVTTVHGNLT) the chain is Extracellular. N-linked (GlcNAc...) asparagine glycosylation is present at asparagine 156. The chain crosses the membrane as a helical span at residues 159 to 179 (AGHGLLVELIITFQLVFTIFA). The Cytoplasmic portion of the chain corresponds to 180-187 (SCDSKRTD). Serine 183 carries the phosphoserine; by PKC modification. The helical transmembrane segment at 188–208 (VTGSIALAIGFSVAIGHLFAI) threads the bilayer. Residue asparagine 209 is glycosylated (N-linked (GlcNAc...) asparagine). The Extracellular portion of the chain corresponds to 209–211 (NYT). An intramembrane region (discontinuously helical) is located at residues 212 to 225 (GASMNPARSFGPAV). The NPA 2 signature appears at 216 to 218 (NPA). At 226–234 (IMGNWENHW) the chain is on the extracellular side. A helical membrane pass occupies residues 235-255 (IYWVGPIIGAVLAGALYEYVF). Residues 256–326 (CPDVELKRRL…DSAGEVLSSV (71 aa)) are Cytoplasmic-facing. 2 positions are modified to phosphoserine: serine 279 and serine 288. Phosphothreonine is present on threonine 292. Serine 324 is subject to Phosphoserine.

This sequence belongs to the MIP/aquaporin (TC 1.A.8) family. As to quaternary structure, homotetramer. The tetramers can form oligomeric arrays in membranes. The size of the oligomers differs between tissues and is smaller in skeletal muscle than in brain. Interaction between AQP4 oligomeric arrays in close-by cells can contribute to cell-cell adhesion. Part of a complex containing MLC1, TRPV4, HEPACAM and ATP1B1. Post-translationally, phosphorylation by PKC at Ser-183 reduces conductance by 50%. Phosphorylation by PKG at Ser-114 in response to glutamate increases conductance by 40%. In terms of processing, isoform Long: Palmitoylated on its N-terminal region.

Its subcellular location is the cell membrane. It is found in the basolateral cell membrane. The protein resides in the endosome membrane. It localises to the sarcolemma. The protein localises to the cell projection. The enzyme catalyses H2O(in) = H2O(out). Its function is as follows. Forms a water-specific channel. Plays an important role in brain water homeostasis and in glymphatic solute transport. Required for a normal rate of water exchange across the blood brain interface. Required for normal levels of cerebrospinal fluid influx into the brain cortex and parenchyma along paravascular spaces that surround penetrating arteries, and for normal drainage of interstitial fluid along paravenous drainage pathways. Thereby, it is required for normal clearance of solutes from the brain interstitial fluid, including soluble beta-amyloid peptides derived from APP. Plays a redundant role in urinary water homeostasis and urinary concentrating ability. In Notomys alexis (Spinifex hopping mouse), this protein is Aquaporin-4 (AQP4).